We begin with the raw amino-acid sequence, 585 residues long: Arginine--tRNA ligase (585 aa).

The short motif at P126–H136 is the 'HIGH' region element.

The protein belongs to the class-I aminoacyl-tRNA synthetase family. In terms of assembly, monomer.

Its subcellular location is the cytoplasm. The enzyme catalyses tRNA(Arg) + L-arginine + ATP = L-arginyl-tRNA(Arg) + AMP + diphosphate. The sequence is that of Arginine--tRNA ligase from Crocosphaera subtropica (strain ATCC 51142 / BH68) (Cyanothece sp. (strain ATCC 51142)).